A 149-amino-acid chain; its full sequence is Sex-regulated protein janus-A (149 aa).

Lys46 serves as a coordination point for substrate. The active-site Proton acceptor is His77. 118 to 120 (STG) serves as a coordination point for substrate.

The protein belongs to the janus family.

Its function is as follows. JanA and janB regulate somatic sex differentiation. The polypeptide is Sex-regulated protein janus-A (janA) (Drosophila pseudoobscura pseudoobscura (Fruit fly)).